A 581-amino-acid chain; its full sequence is Pyridine nucleotide-disulfide oxidoreductase domain-containing protein 2 (581 aa).

Val38–Gly71 is a binding site for FAD.

Belongs to the carotenoid/retinoid oxidoreductase family. Interacts with COX5B; this interaction may contribute to localize PYROXD2 to the inner face of the inner mitochondrial membrane.

The protein resides in the mitochondrion matrix. Functionally, probable oxidoreductase that may play a role as regulator of mitochondrial function. The chain is Pyridine nucleotide-disulfide oxidoreductase domain-containing protein 2 from Rattus norvegicus (Rat).